The following is a 683-amino-acid chain: WD repeat-containing protein 48 homolog (683 aa).

WD repeat units lie at residues 27 to 82 (SNRS…PVQY), 88 to 130 (QHTD…FIDC), 133 to 167 (THKDYVSCLAYAPIVEKAVSASFDHNIFVYDINAN), 176 to 215 (GCKDSIYSLATTPNLSLVLGAGTEKCIRLFDPRTNEKIMK), 218 to 257 (GHTDNVRALVVNDDGTRALSAGSDATIRLWDIGQQRCIAT), 260 to 299 (AHEEGVWTLQVDSSFTTVYSAGKDKMVVKTPLYDFTKSQL), and 302 to 343 (KEEA…QLSI). A disordered region spans residues 341-364 (LSIGGDEDGPSTSNANHSVSASSS). The span at 351–364 (STSNANHSVSASSS) shows a compositional bias: low complexity. The stretch at 389–428 (PGAPAIKKHAMLSDKRHVLTRDSDGNVALYDVLAARKIKD) is one WD 8 repeat.

This sequence belongs to the WD repeat WDR48 family. As to quaternary structure, interacts with usp-46; the interaction increases the catalytic activity of usp-46 in the presence of wdr-20. As to expression, expressed in several head neurons and cells in the tail including the anal depressor cell.

Functionally, together with wdr-20, binds to and stimulates the activity of the deubiquitinating enzyme usp-46, leading to deubiquitination and stabilization of the glr-1 glutamate receptor. The protein is WD repeat-containing protein 48 homolog (wdr-48) of Caenorhabditis elegans.